The chain runs to 720 residues: MAEKFESLMNIHGFDLGSRYMDLKPLGCGGNGLVFSAVDNDCDKRVAIKKIVLTDPQSVKHALREIKIIRRLDHDNIVKVFEILGPSGSQLTDDVGSLTELNSVYIVQEYMETDLANVLEQGPLLEEHARLFMYQLLRGLKYIHSANVLHRDLKPANLFINTEDLVLKIGDFGLARIMDPHYSHKGHLSEGLVTKWYRSPRLLLSPNNYTKAIDMWAAGCIFAEMLTGKTLFAGAHELEQMQLILESIPVVHEEDRQELLSVIPVYIRNDMTEPHKPLTQLLPGISREALDFLEQILTFSPMDRLTAEEALSHPYMSIYSFPTDEPISSHPFHIEDEVDDILLMDETHSHIYNWERYHDCQFSEHDWPIHNNFDIDEVQLDPRALSDVTDEEEVQVDPRKYLDGDREKYLEDPAFDTSYSAEPCWQYPDHHENKYCDLECSHTCNYKTRSPSYLDNLVWRESEVNHYYEPKLIIDLSNWKEQSKDKSDKRGKSKCERNGLVKAQIALEEASQQLAERERGQGFDFDAFIAGTVQLSAQRESADVVDKLNDLNSSVSQLEMKSLISKSVSREKQEKGRANLAQLGALYQPSWESQFVSGGEECFLISQFCCEVRKDEHVEKENTYTSYLDKFFSRKEDSEMLETEPVEEGKRGERGREAGLLSSGGEFLLSRQLESIGTPQFHSPGGSPLKSIQATLTPSAMKSSPQIPHKTYSNILKHLN.

A Peptide (Met-Gly) (interchain with G-Cter in ubiquitin) cross-link involves residue methionine 1. A Protein kinase domain is found at 20–316 (YMDLKPLGCG…AEEALSHPYM (297 aa)). Residues 26–34 (LGCGGNGLV) and lysine 49 each bind ATP. Aspartate 152 (proton acceptor) is an active-site residue. The residue at position 189 (serine 189) is a Phosphoserine; by PAK1, PAK2 and PAK3. An SEG motif motif is present at residues 189-191 (SEG). Residues 332 to 337 (FHIEDE) carry the FRIEDE motif motif. Serine 386, serine 452, serine 554, and serine 556 each carry phosphoserine. The tract at residues 638-657 (SEMLETEPVEEGKRGERGRE) is disordered. Basic and acidic residues predominate over residues 647–657 (EEGKRGERGRE). Phosphoserine is present on serine 683. The span at 698 to 714 (PSAMKSSPQIPHKTYSN) shows a compositional bias: polar residues. The disordered stretch occupies residues 698 to 720 (PSAMKSSPQIPHKTYSNILKHLN).

The protein belongs to the protein kinase superfamily. CMGC Ser/Thr protein kinase family. MAP kinase subfamily. In terms of assembly, heterodimer with ERK4/MAPK4. Interacts with (via FRIEDE motif) MAPKAPK5. Interacts with UBE3A; this interaction may be indirect and mediated by HERC2, possibly via HERC2 interaction with NEURL4. It depends on Mg(2+) as a cofactor. Post-translationally, phosphorylated at Ser-189 by PAK1, PAK2 and PAK3 resulting in catalytic activation. Phosphorylated by MAPKAPK5 at other sites. Ubiquitination at Met-1 leads to degradation by the proteasome pathway. In terms of tissue distribution, highest levels within the nervous system, expressed in different tissues, mostly in skeletal muscle.

It is found in the cytoplasm. Its subcellular location is the nucleus. It carries out the reaction L-seryl-[protein] + ATP = O-phospho-L-seryl-[protein] + ADP + H(+). The enzyme catalyses L-threonyl-[protein] + ATP = O-phospho-L-threonyl-[protein] + ADP + H(+). Activated by phosphorylation at Ser-189. Atypical MAPK protein. Phosphorylates microtubule-associated protein 2 (MAP2) and MAPKAPK5. The precise role of the complex formed with MAPKAPK5 is still unclear, but the complex follows a complex set of phosphorylation events: upon interaction with atypical MAPKAPK5, ERK3/MAPK6 is phosphorylated at Ser-189 and then mediates phosphorylation and activation of MAPKAPK5, which in turn phosphorylates ERK3/MAPK6. May promote entry in the cell cycle. In Rattus norvegicus (Rat), this protein is Mitogen-activated protein kinase 6 (Mapk6).